A 229-amino-acid chain; its full sequence is MCYNMEKYTEKKQRNQVFQKFIKRHIGENQMDLVEDCNTFLSFVADKTLEKQKLYKANSCKNRFCPVCAWRKARKDALGLSLMMQYIKQQEKKEFIFLTLTTPNVMSDELENEIKRYNNSFRKLIKRKKVGSVIKGYVRKLEITYNKKRDDYNPHFHVLIAVNKSYFTDKRYYISQQEWLDLWRDVTGISEITQVQVQKIRQNNNKELYEMAKYSGKDSDYLINKSKSL.

Tyr-214 serves as a coordination point for DNA.

It belongs to the Gram-positive plasmids replication protein type 1 family.

In terms of biological role, produces a single-strand nick in a specific site of the plasmid, and this nick results in single-strand replication by rolling circle mechanism. The chain is Protein rep from Staphylococcus aureus.